Reading from the N-terminus, the 47-residue chain is Small, acid-soluble spore protein N (47 aa).

The segment at 1–47 is disordered; sequence MSNPKRSPNHFAPNHIGTQPRAAGGNKGKQMQDQSGQHAQVIQTKGE. Polar residues predominate over residues 29–47; it reads KQMQDQSGQHAQVIQTKGE.

It belongs to the SspN family.

It localises to the spore core. This chain is Small, acid-soluble spore protein N, found in Geobacillus thermodenitrificans (strain NG80-2).